The sequence spans 140 residues: Large ribosomal subunit protein uL11 (140 aa).

The protein belongs to the universal ribosomal protein uL11 family. In terms of assembly, part of the ribosomal stalk of the 50S ribosomal subunit. Interacts with L10 and the large rRNA to form the base of the stalk. L10 forms an elongated spine to which L12 dimers bind in a sequential fashion forming a multimeric L10(L12)X complex. One or more lysine residues are methylated.

Its function is as follows. Forms part of the ribosomal stalk which helps the ribosome interact with GTP-bound translation factors. The polypeptide is Large ribosomal subunit protein uL11 (Syntrophotalea carbinolica (strain DSM 2380 / NBRC 103641 / GraBd1) (Pelobacter carbinolicus)).